A 257-amino-acid chain; its full sequence is UPF0246 protein HAPS_0280 (257 aa).

It belongs to the UPF0246 family.

This chain is UPF0246 protein HAPS_0280, found in Glaesserella parasuis serovar 5 (strain SH0165) (Haemophilus parasuis).